Consider the following 201-residue polypeptide: Alpha-1-acid glycoprotein 1 (201 aa).

Positions 1 to 18 are cleaved as a signal peptide; the sequence is MALSWVLTVLSLLPLLEA. Gln19 is modified (pyrrolidone carboxylic acid). 2 disulfide bridges follow: Cys23/Cys165 and Cys90/Cys183. Asn33 is a glycosylation site (N-linked (GlcNAc...) (complex) asparagine). An N-linked (GlcNAc...) asparagine glycan is attached at Asn56. N-linked (GlcNAc...) (complex) asparagine glycosylation is present at Asn72. Asn93 and Asn103 each carry an N-linked (GlcNAc...) asparagine glycan.

This sequence belongs to the calycin superfamily. Lipocalin family. In terms of processing, N-glycosylated. N-glycan heterogeneity at Asn-33: Hex5HexNAc4 (minor), Hex6HexNAc5 (major) and dHex1Hex6HexNAc5 (minor). In terms of tissue distribution, expressed by the liver and secreted in plasma.

Its subcellular location is the secreted. Functions as a transport protein in the blood stream. Binds various ligands in the interior of its beta-barrel domain. Also binds synthetic drugs and influences their distribution and availability in the body. Appears to function in modulating the activity of the immune system during the acute-phase reaction. The protein is Alpha-1-acid glycoprotein 1 (ORM1) of Homo sapiens (Human).